The following is a 217-amino-acid chain: UPF0502 protein AHA_2872 (217 aa).

This sequence belongs to the UPF0502 family.

The sequence is that of UPF0502 protein AHA_2872 from Aeromonas hydrophila subsp. hydrophila (strain ATCC 7966 / DSM 30187 / BCRC 13018 / CCUG 14551 / JCM 1027 / KCTC 2358 / NCIMB 9240 / NCTC 8049).